Here is a 160-residue protein sequence, read N- to C-terminus: Cytochrome b6-f complex subunit 4 (160 aa).

Helical transmembrane passes span 36–56 (LLYIFPVVILGTIACIVGLAV), 95–115 (LLGIALQTLVPLGLMLVPFIE), and 131–151 (TVFLFGTVTTIYLGIGAALPI).

Belongs to the cytochrome b family. PetD subfamily. As to quaternary structure, the 4 large subunits of the cytochrome b6-f complex are cytochrome b6, subunit IV (17 kDa polypeptide, PetD), cytochrome f and the Rieske protein, while the 4 small subunits are PetG, PetL, PetM and PetN. The complex functions as a dimer.

The protein localises to the cellular thylakoid membrane. Component of the cytochrome b6-f complex, which mediates electron transfer between photosystem II (PSII) and photosystem I (PSI), cyclic electron flow around PSI, and state transitions. In Parasynechococcus marenigrum (strain WH8102), this protein is Cytochrome b6-f complex subunit 4.